A 263-amino-acid polypeptide reads, in one-letter code: Glutamate racemase (263 aa).

Residues 13–14 (DS) and 45–46 (YG) contribute to the substrate site. The active-site Proton donor/acceptor is cysteine 77. 78–79 (NT) contributes to the substrate binding site. Cysteine 185 (proton donor/acceptor) is an active-site residue. Residue 186–187 (TH) coordinates substrate.

This sequence belongs to the aspartate/glutamate racemases family.

The enzyme catalyses L-glutamate = D-glutamate. The protein operates within cell wall biogenesis; peptidoglycan biosynthesis. Its function is as follows. Provides the (R)-glutamate required for cell wall biosynthesis. In Vibrio vulnificus (strain CMCP6), this protein is Glutamate racemase.